A 282-amino-acid chain; its full sequence is Ribosome biogenesis GTPase A (282 aa).

The CP-type G domain maps to 14 to 178 (RREVTEKLKL…LLDTPGILWP (165 aa)). GTP is bound by residues 58–61 (NKAD), 86–87 (NS), 130–135 (NVGKST), and G174.

It belongs to the TRAFAC class YlqF/YawG GTPase family. MTG1 subfamily. In terms of assembly, interacts with ctc. Interacts with the immature 50S ribosome subunit. 2 molecules of rbgA bind to one 50S subunit.

It is found in the cytoplasm. Its function is as follows. Essential protein that is required for a late step of 50S ribosomal subunit assembly. Has GTPase activity that is stimulated by interaction with the immature 50S ribosome subunit. Binds to the 23S rRNA. Required for the association of ribosomal proteins rplP and rpmA with the large subunit. The sequence is that of Ribosome biogenesis GTPase A from Bacillus pumilus (strain SAFR-032).